The following is a 371-amino-acid chain: Cytochrome b (371 aa).

4 consecutive transmembrane segments (helical) span residues 25-45 (FGSM…FLAV), 69-90 (WMVQ…YIHI), 105-125 (WLSG…GYVL), and 170-190 (FFAL…LHVL). His75 and His89 together coordinate heme b. The heme b site is built by His174 and His188. Residue His193 coordinates a ubiquinone. Transmembrane regions (helical) follow at residues 218–238 (MKDL…ISFF), 280–300 (LGGA…PFIH), 312–332 (LMQL…WAAT), and 339–358 (FISI…ISNP).

The protein belongs to the cytochrome b family. In terms of assembly, the cytochrome bc1 complex contains 3 respiratory subunits (MT-CYB, CYC1 and UQCRFS1), 2 core proteins (UQCRC1 and UQCRC2) and probably 6 low-molecular weight proteins. Heme b is required as a cofactor.

It is found in the mitochondrion inner membrane. Component of the ubiquinol-cytochrome c reductase complex (complex III or cytochrome b-c1 complex) that is part of the mitochondrial respiratory chain. The b-c1 complex mediates electron transfer from ubiquinol to cytochrome c. Contributes to the generation of a proton gradient across the mitochondrial membrane that is then used for ATP synthesis. The protein is Cytochrome b (MT-CYB) of Boa constrictor (Boa).